A 346-amino-acid polypeptide reads, in one-letter code: 36.4 kDa proline-rich protein (346 aa).

The tract at residues Pro-11–Ile-144 is disordered. 3 stretches are compositionally biased toward pro residues: residues Lys-25–Pro-42, Val-51–Pro-81, and Gln-89–Ile-144.

The protein is 36.4 kDa proline-rich protein (TPRP-F1) of Solanum lycopersicum (Tomato).